Reading from the N-terminus, the 441-residue chain is Ribulose bisphosphate carboxylase large chain (441 aa).

Substrate-binding residues include asparagine 89 and threonine 139. Catalysis depends on lysine 141, which acts as the Proton acceptor. Residue lysine 143 participates in substrate binding. Residues lysine 167, aspartate 169, and glutamate 170 each contribute to the Mg(2+) site. Lysine 167 bears the N6-carboxylysine mark. The active-site Proton acceptor is the histidine 260. Residue 261, histidine 293, and serine 345 together coordinate substrate.

Belongs to the RuBisCO large chain family. Type I subfamily. Heterohexadecamer of 8 large chains and 8 small chains; disulfide-linked. The disulfide link is formed within the large subunit homodimers. It depends on Mg(2+) as a cofactor. The disulfide bond which can form in the large chain dimeric partners within the hexadecamer appears to be associated with oxidative stress and protein turnover.

It localises to the plastid. Its subcellular location is the chloroplast. It carries out the reaction 2 (2R)-3-phosphoglycerate + 2 H(+) = D-ribulose 1,5-bisphosphate + CO2 + H2O. The catalysed reaction is D-ribulose 1,5-bisphosphate + O2 = 2-phosphoglycolate + (2R)-3-phosphoglycerate + 2 H(+). Functionally, ruBisCO catalyzes two reactions: the carboxylation of D-ribulose 1,5-bisphosphate, the primary event in carbon dioxide fixation, as well as the oxidative fragmentation of the pentose substrate in the photorespiration process. Both reactions occur simultaneously and in competition at the same active site. The polypeptide is Ribulose bisphosphate carboxylase large chain (Apocynum cannabinum (Hemp dogbane)).